Reading from the N-terminus, the 473-residue chain is Tubulin gamma chain (473 aa).

A disordered region spans residues 33 to 56; it reads TDGLSQLPDSSTERDDDTKPFFRE. The span at 43–56 shows a compositional bias: basic and acidic residues; sequence STERDDDTKPFFRE. 143 to 149 provides a ligand contact to GTP; that stretch reads AGGTGSG.

It belongs to the tubulin family. Interacts with SPC72, SPC97 and SPC98.

Its subcellular location is the cytoplasm. The protein resides in the cytoskeleton. It is found in the microtubule organizing center. It localises to the spindle pole body. Tubulin is the major constituent of microtubules. The gamma chain is found at microtubule organizing centers (MTOC) such as the spindle poles or the centrosome, suggesting that it is involved in the minus-end nucleation of microtubule assembly. TUB4 is an important spindle pole body component that organizes both cytoplasmic and nuclear microtubule arrays. The polypeptide is Tubulin gamma chain (TUB4) (Saccharomyces cerevisiae (strain ATCC 204508 / S288c) (Baker's yeast)).